The primary structure comprises 527 residues: Cytokinin dehydrogenase 3 (527 aa).

The N-terminal stretch at methionine 1–proline 22 is a signal peptide. In terms of domain architecture, FAD-binding PCMH-type spans leucine 52–alanine 231. FAD contacts are provided by alanine 87, glycine 89, and glycine 91. Histidine 92 is modified (pros-8alpha-FAD histidine). Positions 93, 97, 155, 160, 166, 170, and 221 each coordinate FAD. The N-linked (GlcNAc...) asparagine glycan is linked to asparagine 413. Positions 471 and 509 each coordinate FAD.

Belongs to the oxygen-dependent FAD-linked oxidoreductase family. As to quaternary structure, monomer. FAD serves as cofactor. As to expression, expressed in inflorescence meristems. Highly expressed in lamina joints, and mainly in the parenchyma cells and vascular bundles on the abaxial side of the lamina joint. Expressed in roots, stems, leaves and young panicles.

It is found in the endoplasmic reticulum. The catalysed reaction is N(6)-dimethylallyladenine + A + H2O = 3-methyl-2-butenal + adenine + AH2. In terms of biological role, catalyzes the oxidation of cytokinins, a family of N(6)-substituted adenine derivatives, where the substituent is an isopentenyl group. Cytokinins are plant hormones essential for plant growth, development, and stress responses. Exhibits specific activities toward trans-zeatin (tZ) and isopentenyladenine (iP). Plays a role in lamina joint inclination. Regulates cell proliferation and vascular bundle number on the abaxial side of lamina joint. The protein is Cytokinin dehydrogenase 3 of Oryza sativa subsp. japonica (Rice).